The sequence spans 219 residues: Steroid receptor RNA activator 1 (219 aa).

Disordered regions lie at residues 1–90 and 192–219; these read MAEL…SSPV and SLSS…QPSS. Positions 23–32 are enriched in polar residues; the sequence is YGLQTQTGGT. At S48 the chain carries Phosphoserine. Pro residues predominate over residues 55-76; sequence SGPPPVDHPPPSSKASRPPPMG. Residues 192–203 are compositionally biased toward basic and acidic residues; sequence SLSSEENKEEKS. A compositionally biased stretch (polar residues) spans 206–219; that stretch reads APENQTIPGFQPSS.

Belongs to the SRA1 family. SRA1 RNA exists in a ribonucleoprotein complex containing NCOA1. The RNA also forms a complex with PUS1 and RARG in the nucleus. Interacts with AR. Expressed in various prostate cancer cell lines.

The protein resides in the nucleus. Its subcellular location is the cytoplasm. Functional RNA which acts as a transcriptional coactivator that selectively enhances steroid receptor-mediated transactivation ligand-independently through a mechanism involving the modulating N-terminal domain (AF-1) of steroid receptors. Also mediates transcriptional coactivation of steroid receptors ligand-dependently through the steroid-binding domain (AF-2). Enhances cellular proliferation and differentiation and promotes apoptosis in vivo. May play a role in tumorigenesis. The protein is Steroid receptor RNA activator 1 of Rattus norvegicus (Rat).